Here is a 330-residue protein sequence, read N- to C-terminus: Ig gamma-2A chain C region, A allele (330 aa).

Ig-like domains are found at residues 6 to 98, 121 to 220, and 229 to 325; these read PSVY…KKIE, PSVF…RTIS, and PQVY…KSFS. Intrachain disulfides connect cysteine 27/cysteine 82, cysteine 144/cysteine 204, and cysteine 250/cysteine 308. A glycan (N-linked (GlcNAc...) asparagine) is linked at asparagine 180.

This Mus musculus (Mouse) protein is Ig gamma-2A chain C region, A allele (Ighg).